An 802-amino-acid polypeptide reads, in one-letter code: Phenylalanine--tRNA ligase beta subunit (802 aa).

The 112-residue stretch at 39–150 (AKALKPFTIA…ADAPIGAAYA (112 aa)) folds into the tRNA-binding domain. Residues 400–475 (GDDRVIDFPV…RIYGVDKVPM (76 aa)) enclose the B5 domain. The Mg(2+) site is built by Asp453, Asp459, Glu462, and Glu463. Positions 708–801 (SAFQPVSRDF…VTKKTGGTLR (94 aa)) constitute an FDX-ACB domain.

This sequence belongs to the phenylalanyl-tRNA synthetase beta subunit family. Type 1 subfamily. In terms of assembly, tetramer of two alpha and two beta subunits. Mg(2+) is required as a cofactor.

Its subcellular location is the cytoplasm. The catalysed reaction is tRNA(Phe) + L-phenylalanine + ATP = L-phenylalanyl-tRNA(Phe) + AMP + diphosphate + H(+). This is Phenylalanine--tRNA ligase beta subunit from Bradyrhizobium diazoefficiens (strain JCM 10833 / BCRC 13528 / IAM 13628 / NBRC 14792 / USDA 110).